The following is an 87-amino-acid chain: Small ribosomal subunit protein bS20 (87 aa).

The protein belongs to the bacterial ribosomal protein bS20 family.

Its function is as follows. Binds directly to 16S ribosomal RNA. This chain is Small ribosomal subunit protein bS20, found in Roseobacter denitrificans (strain ATCC 33942 / OCh 114) (Erythrobacter sp. (strain OCh 114)).